The primary structure comprises 561 residues: Urocanate hydratase (561 aa).

NAD(+) contacts are provided by residues 52-53, Gln130, 176-178, Glu196, Arg201, 242-243, 263-267, 273-274, and Tyr322; these read GG, GMG, NA, QTSAH, and YL. Cys410 is an active-site residue. NAD(+) is bound at residue Gly492.

Belongs to the urocanase family. NAD(+) is required as a cofactor.

The protein resides in the cytoplasm. It catalyses the reaction 4-imidazolone-5-propanoate = trans-urocanate + H2O. It functions in the pathway amino-acid degradation; L-histidine degradation into L-glutamate; N-formimidoyl-L-glutamate from L-histidine: step 2/3. Its function is as follows. Catalyzes the conversion of urocanate to 4-imidazolone-5-propionate. The polypeptide is Urocanate hydratase (Citrobacter koseri (strain ATCC BAA-895 / CDC 4225-83 / SGSC4696)).